The following is a 467-amino-acid chain: Cysteine--tRNA ligase (467 aa).

Cysteine 27 serves as a coordination point for Zn(2+). A 'HIGH' region motif is present at residues 29–39; that stretch reads PTVYNYIHIGN. Positions 207, 232, and 236 each coordinate Zn(2+). The 'KMSKS' region motif lies at 264 to 268; it reads KMSKS. Residue lysine 267 participates in ATP binding.

This sequence belongs to the class-I aminoacyl-tRNA synthetase family. In terms of assembly, monomer. It depends on Zn(2+) as a cofactor.

The protein resides in the cytoplasm. It carries out the reaction tRNA(Cys) + L-cysteine + ATP = L-cysteinyl-tRNA(Cys) + AMP + diphosphate. The polypeptide is Cysteine--tRNA ligase (Caldanaerobacter subterraneus subsp. tengcongensis (strain DSM 15242 / JCM 11007 / NBRC 100824 / MB4) (Thermoanaerobacter tengcongensis)).